The sequence spans 38 residues: Large ribosomal subunit protein bL36 (38 aa).

This sequence belongs to the bacterial ribosomal protein bL36 family.

This is Large ribosomal subunit protein bL36 from Buchnera aphidicola subsp. Cinara cedri (strain Cc).